The primary structure comprises 149 residues: Arginine repressor (149 aa).

The protein belongs to the ArgR family.

It localises to the cytoplasm. The protein operates within amino-acid biosynthesis; L-arginine biosynthesis [regulation]. Functionally, regulates arginine biosynthesis genes. This is Arginine repressor from Alkaliphilus metalliredigens (strain QYMF).